The sequence spans 601 residues: Aspartate--tRNA(Asp/Asn) ligase (601 aa).

E173 contacts L-aspartate. An aspartate region spans residues Q197 to K200. R219 is an L-aspartate binding site. ATP is bound by residues R219–E221 and Q228. L-aspartate is bound at residue H456. Residue E490 participates in ATP binding. An L-aspartate-binding site is contributed by R497. Residue G542–R545 participates in ATP binding. A disordered region spans residues G566 to A601. The span at V592–A601 shows a compositional bias: acidic residues.

This sequence belongs to the class-II aminoacyl-tRNA synthetase family. Type 1 subfamily. Homodimer.

The protein resides in the cytoplasm. The catalysed reaction is tRNA(Asx) + L-aspartate + ATP = L-aspartyl-tRNA(Asx) + AMP + diphosphate. In terms of biological role, aspartyl-tRNA synthetase with relaxed tRNA specificity since it is able to aspartylate not only its cognate tRNA(Asp) but also tRNA(Asn). Reaction proceeds in two steps: L-aspartate is first activated by ATP to form Asp-AMP and then transferred to the acceptor end of tRNA(Asp/Asn). The sequence is that of Aspartate--tRNA(Asp/Asn) ligase from Beutenbergia cavernae (strain ATCC BAA-8 / DSM 12333 / CCUG 43141 / JCM 11478 / NBRC 16432 / NCIMB 13614 / HKI 0122).